We begin with the raw amino-acid sequence, 182 residues long: Small ribosomal subunit protein uS4 (182 aa).

Disordered stretches follow at residues 1 to 23 (MGHP…ADRI) and 158 to 182 (SSVA…KDEE). The region spanning 103-170 (RRLQSLVFKR…AKQFETQETE (68 aa)) is the S4 RNA-binding domain. Residues 167–182 (QETEEVAAEEEPKDEE) show a composition bias toward acidic residues.

Belongs to the universal ribosomal protein uS4 family. Part of the 30S ribosomal subunit. Contacts protein S5. The interaction surface between S4 and S5 is involved in control of translational fidelity.

Its function is as follows. One of the primary rRNA binding proteins, it binds directly to 16S rRNA where it nucleates assembly of the body of the 30S subunit. Functionally, with S5 and S12 plays an important role in translational accuracy. This is Small ribosomal subunit protein uS4 from Methanosphaera stadtmanae (strain ATCC 43021 / DSM 3091 / JCM 11832 / MCB-3).